We begin with the raw amino-acid sequence, 331 residues long: Tetraacyldisaccharide 4'-kinase (331 aa).

Residue 51–58 participates in ATP binding; that stretch reads TAGGAGKT.

This sequence belongs to the LpxK family.

It carries out the reaction a lipid A disaccharide + ATP = a lipid IVA + ADP + H(+). The protein operates within glycolipid biosynthesis; lipid IV(A) biosynthesis; lipid IV(A) from (3R)-3-hydroxytetradecanoyl-[acyl-carrier-protein] and UDP-N-acetyl-alpha-D-glucosamine: step 6/6. In terms of biological role, transfers the gamma-phosphate of ATP to the 4'-position of a tetraacyldisaccharide 1-phosphate intermediate (termed DS-1-P) to form tetraacyldisaccharide 1,4'-bis-phosphate (lipid IVA). This chain is Tetraacyldisaccharide 4'-kinase, found in Rhodospirillum rubrum (strain ATCC 11170 / ATH 1.1.1 / DSM 467 / LMG 4362 / NCIMB 8255 / S1).